The following is a 354-amino-acid chain: Tyrosine recombinase XerH (354 aa).

The Core-binding (CB) domain occupies 48–134 (LTKGVKNIDE…AVINFFDFLD (87 aa)). The Tyr recombinase domain occupies 163 to 346 (KLPEFMSKEE…DNDKLKLAAQ (184 aa)). Active-site residues include arginine 205, lysine 231, histidine 298, arginine 301, and histidine 324. The O-(3'-phospho-DNA)-tyrosine intermediate role is filled by tyrosine 333.

The protein belongs to the 'phage' integrase family. XerH subfamily.

It localises to the cytoplasm. With respect to regulation, ftsK is required for efficient recombination. Its function is as follows. Site-specific tyrosine recombinase, which acts by catalyzing the cutting and rejoining of the recombining DNA molecules. Binds to the complete atypical dif motif (difH) site and to both halves separately. The chain is Tyrosine recombinase XerH from Campylobacter jejuni subsp. jejuni serotype O:2 (strain ATCC 700819 / NCTC 11168).